A 78-amino-acid polypeptide reads, in one-letter code: Large ribosomal subunit protein bL28 (78 aa).

A disordered region spans residues Met-1–Asn-23. Residues Arg-11 to Asn-22 show a composition bias toward polar residues.

Belongs to the bacterial ribosomal protein bL28 family.

The chain is Large ribosomal subunit protein bL28 from Xanthomonas campestris pv. campestris (strain 8004).